The following is a 551-amino-acid chain: MGNACGGSLRSKYLSFKQTASQRHDTDDNNNAAAADSPKKPSRPPAAAKTDDHPVSASAPAAAMRRGQAPADLGSVLGHPTPNLRDLYAMGRKLGQGQFGTTYLCTELSTGVDYACKSISKRKLITKEDIEDVRREIQIMHHLSGHKNVVAIKGAYEDQLYVHIVMELCAGGELFDRIIQRGHYSERKAAELTRIIVGVVEACHSLGVMHRDLKPENFLLANKDDDLSLKAIDFGLSVFFKPGQTFTDVVGSPYYVAPEVLLKHYGPEADVWTAGVILYILLSGVPPFWAETQQGIFDAVLKGFIDFDSDPWPVISESAKDLITKMLNPRPKERLTAHEVLCHPWIRDHGVAPDRPLDPAVLSRIKQFSAMNKLKKMALRVIAESLSEEEIAGLKEMFQTMDADNSGAITYDELKEGLRKYGSTLKDTEIRDLMDAADIDNSGTIDYIEFIAATLHLNKLEREEHLVAAFSYFDKDGSGYITVDELQQACKEHNMPDAFLDDVINEADQDNDGRIDYGEFVAMMTKGNMGVGRRTMRNSLNISMRDAPGAL.

The N-myristoyl glycine moiety is linked to residue Gly-2. A disordered region spans residues 15 to 78 (SFKQTASQRH…APADLGSVLG (64 aa)). The Protein kinase domain occupies 88–346 (YAMGRKLGQG…AHEVLCHPWI (259 aa)). Residues 94–102 (LGQGQFGTT) and Lys-117 contribute to the ATP site. Asp-212 serves as the catalytic Proton acceptor. Residues 352 to 382 (APDRPLDPAVLSRIKQFSAMNKLKKMALRVI) form an autoinhibitory domain region. EF-hand domains lie at 389-424 (EEIA…YGST), 425-460 (LKDT…LNKL), 461-496 (EREE…HNMP), and 497-530 (DAFL…GNMG). Asp-402, Asp-404, Ser-406, Glu-413, Asp-438, Asp-440, Ser-442, Thr-444, Glu-449, Asp-474, Asp-476, Ser-478, Tyr-480, Glu-485, Asp-508, Asp-510, Asp-512, Arg-514, and Glu-519 together coordinate Ca(2+).

Belongs to the protein kinase superfamily. Ser/Thr protein kinase family. CDPK subfamily. In terms of tissue distribution, expressed in vascular tissues of crowns and roots, vascular bundles and central cylinder. Expressed in roots, leaf blades, spikelets and developing seeds.

Its subcellular location is the membrane. The catalysed reaction is L-seryl-[protein] + ATP = O-phospho-L-seryl-[protein] + ADP + H(+). The enzyme catalyses L-threonyl-[protein] + ATP = O-phospho-L-threonyl-[protein] + ADP + H(+). Activated by calcium. Autophosphorylation may play an important role in the regulation of the kinase activity. Its function is as follows. May play a role in signal transduction pathways that involve calcium as a second messenger. May function in signal transduction pathways that positively regulate responses to cold, salt and drought stresses. In Oryza sativa subsp. japonica (Rice), this protein is Calcium-dependent protein kinase 13.